The primary structure comprises 407 residues: CCA-adding enzyme (407 aa).

Gly-32 and Arg-35 together coordinate ATP. Residues Gly-32 and Arg-35 each coordinate CTP. Mg(2+) is bound by residues Asp-45 and Asp-47. The ATP site is built by Arg-116, Asp-159, Arg-162, Arg-165, and Arg-168. Positions 116, 159, 162, 165, and 168 each coordinate CTP.

The protein belongs to the tRNA nucleotidyltransferase/poly(A) polymerase family. Bacterial CCA-adding enzyme type 3 subfamily. As to quaternary structure, homodimer. The cofactor is Mg(2+).

The enzyme catalyses a tRNA precursor + 2 CTP + ATP = a tRNA with a 3' CCA end + 3 diphosphate. The catalysed reaction is a tRNA with a 3' CCA end + 2 CTP + ATP = a tRNA with a 3' CCACCA end + 3 diphosphate. Its function is as follows. Catalyzes the addition and repair of the essential 3'-terminal CCA sequence in tRNAs without using a nucleic acid template. Adds these three nucleotides in the order of C, C, and A to the tRNA nucleotide-73, using CTP and ATP as substrates and producing inorganic pyrophosphate. tRNA 3'-terminal CCA addition is required both for tRNA processing and repair. Also involved in tRNA surveillance by mediating tandem CCA addition to generate a CCACCA at the 3' terminus of unstable tRNAs. While stable tRNAs receive only 3'-terminal CCA, unstable tRNAs are marked with CCACCA and rapidly degraded. The polypeptide is CCA-adding enzyme (Lactiplantibacillus plantarum (strain ATCC BAA-793 / NCIMB 8826 / WCFS1) (Lactobacillus plantarum)).